Reading from the N-terminus, the 98-residue chain is NADH-ubiquinone oxidoreductase chain 4L (98 aa).

3 consecutive transmembrane segments (helical) span residues 1-21 (MSMV…GLLM), 29-49 (SLLC…MVVL), and 61-81 (IILL…LVMV).

Belongs to the complex I subunit 4L family. Core subunit of respiratory chain NADH dehydrogenase (Complex I) which is composed of 45 different subunits.

The protein resides in the mitochondrion inner membrane. The catalysed reaction is a ubiquinone + NADH + 5 H(+)(in) = a ubiquinol + NAD(+) + 4 H(+)(out). Functionally, core subunit of the mitochondrial membrane respiratory chain NADH dehydrogenase (Complex I) which catalyzes electron transfer from NADH through the respiratory chain, using ubiquinone as an electron acceptor. Part of the enzyme membrane arm which is embedded in the lipid bilayer and involved in proton translocation. In Acinonyx jubatus (Cheetah), this protein is NADH-ubiquinone oxidoreductase chain 4L (MT-ND4L).